A 474-amino-acid polypeptide reads, in one-letter code: Ribulose bisphosphate carboxylase/oxygenase activase, chloroplastic (474 aa).

The N-terminal 58 residues, 1–58 (MAAAVSTVGAINRAPLSLNGSGSGAVSAPASTFLGKKVVTVSRFAQSNKKSNGSFKVL), are a transit peptide targeting the chloroplast. Residue T78 is modified to Phosphothreonine; by CK2. 165–172 (GGKGQGKS) contributes to the ATP binding site. T283 is subject to Phosphothreonine.

The protein belongs to the RuBisCO activase family. Phosphorylated at Thr-78 by CK2.

The protein localises to the plastid. It localises to the chloroplast stroma. The protein resides in the chloroplast. Its subcellular location is the plastoglobule. In terms of biological role, activation of RuBisCO (ribulose-1,5-bisphosphate carboxylase/oxygenase; EC 4.1.1.39) involves the ATP-dependent carboxylation of the epsilon-amino group of lysine leading to a carbamate structure. This is Ribulose bisphosphate carboxylase/oxygenase activase, chloroplastic (RCA) from Arabidopsis thaliana (Mouse-ear cress).